Reading from the N-terminus, the 107-residue chain is Period circadian protein (107 aa).

The interval 81-107 (ITNGSNTGTGTSSGSFQPPLLTEALLN) is disordered. Residues 82-95 (TNGSNTGTGTSSGS) show a composition bias toward low complexity.

In terms of assembly, forms a heterodimer with timeless (TIM); the complex then translocates into the nucleus. Post-translationally, phosphorylated with a circadian rhythmicity, probably by the double-time protein (dbt). Phosphorylation could be implicated in the stability of per monomer and in the formation of heterodimer per-tim.

It is found in the nucleus. It localises to the cytoplasm. The protein resides in the perinuclear region. In terms of biological role, essential for biological clock functions. Determines the period length of circadian and ultradian rhythms; an increase in PER dosage leads to shortened circadian rhythms and a decrease leads to lengthened circadian rhythms. Essential for the circadian rhythmicity of locomotor activity, eclosion behavior, and for the rhythmic component of the male courtship song that originates in the thoracic nervous system. The biological cycle depends on the rhythmic formation and nuclear localization of the TIM-PER complex. Light induces the degradation of TIM, which promotes elimination of PER. Nuclear activity of the heterodimer coordinatively regulates PER and TIM transcription through a negative feedback loop. Behaves as a negative element in circadian transcriptional loop. Does not appear to bind DNA, suggesting indirect transcriptional inhibition. This is Period circadian protein (per) from Beris vallata (Common orange legionnaire).